The following is a 363-amino-acid chain: Phosphoserine aminotransferase (363 aa).

R42 contributes to the L-glutamate binding site. Pyridoxal 5'-phosphate is bound by residues 76–77 (GR), W102, T156, D175, and Q198. K199 bears the N6-(pyridoxal phosphate)lysine mark. 240–241 (NT) provides a ligand contact to pyridoxal 5'-phosphate.

Belongs to the class-V pyridoxal-phosphate-dependent aminotransferase family. SerC subfamily. In terms of assembly, homodimer. Requires pyridoxal 5'-phosphate as cofactor.

Its subcellular location is the cytoplasm. It carries out the reaction O-phospho-L-serine + 2-oxoglutarate = 3-phosphooxypyruvate + L-glutamate. The catalysed reaction is 4-(phosphooxy)-L-threonine + 2-oxoglutarate = (R)-3-hydroxy-2-oxo-4-phosphooxybutanoate + L-glutamate. The protein operates within amino-acid biosynthesis; L-serine biosynthesis; L-serine from 3-phospho-D-glycerate: step 2/3. It functions in the pathway cofactor biosynthesis; pyridoxine 5'-phosphate biosynthesis; pyridoxine 5'-phosphate from D-erythrose 4-phosphate: step 3/5. Its function is as follows. Catalyzes the reversible conversion of 3-phosphohydroxypyruvate to phosphoserine and of 3-hydroxy-2-oxo-4-phosphonooxybutanoate to phosphohydroxythreonine. This Shewanella denitrificans (strain OS217 / ATCC BAA-1090 / DSM 15013) protein is Phosphoserine aminotransferase.